A 43-amino-acid polypeptide reads, in one-letter code: Protein PsbN (43 aa).

Residues 5 to 27 form a helical membrane-spanning segment; sequence TLIAISISGLIVSFTGYALYTAF.

Belongs to the PsbN family.

The protein localises to the plastid. It localises to the chloroplast thylakoid membrane. In terms of biological role, may play a role in photosystem I and II biogenesis. This chain is Protein PsbN, found in Cicer arietinum (Chickpea).